Here is a 201-residue protein sequence, read N- to C-terminus: Large ribosomal subunit protein uL4 (201 aa).

A disordered region spans residues 43-73 (TRAQKTRSEVSGGGAKPWRQKGTGRARAGTT).

It belongs to the universal ribosomal protein uL4 family. As to quaternary structure, part of the 50S ribosomal subunit.

One of the primary rRNA binding proteins, this protein initially binds near the 5'-end of the 23S rRNA. It is important during the early stages of 50S assembly. It makes multiple contacts with different domains of the 23S rRNA in the assembled 50S subunit and ribosome. Functionally, forms part of the polypeptide exit tunnel. This Colwellia psychrerythraea (strain 34H / ATCC BAA-681) (Vibrio psychroerythus) protein is Large ribosomal subunit protein uL4.